A 122-amino-acid polypeptide reads, in one-letter code: Large ribosomal subunit protein bL12 (122 aa).

It belongs to the bacterial ribosomal protein bL12 family. Homodimer. Part of the ribosomal stalk of the 50S ribosomal subunit. Forms a multimeric L10(L12)X complex, where L10 forms an elongated spine to which 2 to 4 L12 dimers bind in a sequential fashion. Binds GTP-bound translation factors.

In terms of biological role, forms part of the ribosomal stalk which helps the ribosome interact with GTP-bound translation factors. Is thus essential for accurate translation. The chain is Large ribosomal subunit protein bL12 from Azotobacter vinelandii (strain DJ / ATCC BAA-1303).